A 445-amino-acid polypeptide reads, in one-letter code: Phosphoglucosamine mutase (445 aa).

Ser102 serves as the catalytic Phosphoserine intermediate. The Mg(2+) site is built by Ser102, Asp241, Asp243, and Asp245. Phosphoserine is present on Ser102.

This sequence belongs to the phosphohexose mutase family. Mg(2+) serves as cofactor. Activated by phosphorylation.

The enzyme catalyses alpha-D-glucosamine 1-phosphate = D-glucosamine 6-phosphate. Functionally, catalyzes the conversion of glucosamine-6-phosphate to glucosamine-1-phosphate. This chain is Phosphoglucosamine mutase, found in Hahella chejuensis (strain KCTC 2396).